Reading from the N-terminus, the 182-residue chain is Succinate dehydrogenase cytochrome b560 subunit, mitochondrial (182 aa).

The helical transmembrane segment at 65 to 94 threads the bilayer; it reads LTWMLSGFHRISGCVMAGTLLVGGIGFAVL. At 95-114 the chain is on the mitochondrial intermembrane side; the sequence is PFDFTAFVDFIRSWNLPCAV. A helical transmembrane segment spans residues 115–139; the sequence is TAVFKYIIAFPIIFHTLNGIRFLGF. Heme is bound at residue His-129. Topologically, residues 140–147 are mitochondrial matrix; it reads DLAKGVNN. Residues 148–169 form a helical membrane-spanning segment; it reads VGQIYKSGYLVSGLSAILALAI. Residues 170–172 lie on the Mitochondrial intermembrane side of the membrane; sequence VFN.

It belongs to the cytochrome b560 family. In terms of assembly, component of complex II composed of four subunits: a flavoprotein (FP), iron-sulfur protein (IP), and a cytochrome b560 composed of two integral membrane proteins. Requires heme as cofactor.

The protein resides in the mitochondrion inner membrane. It functions in the pathway carbohydrate metabolism; tricarboxylic acid cycle. Its function is as follows. Membrane-anchoring subunit of succinate dehydrogenase (SDH) that is involved in complex II of the mitochondrial electron transport chain and is responsible for transferring electrons from succinate to ubiquinone (coenzyme Q). Mediates resistance to enteropathogenic E.coli infection. In Caenorhabditis elegans, this protein is Succinate dehydrogenase cytochrome b560 subunit, mitochondrial (mev-1).